The sequence spans 483 residues: MTIGWHFDNSYSRLPKTFKENINPVAVNAPEILILNKDLANKLDLDFSNINDDDLSKIFSGNLLPEGSNSIAQAYAGHQFGHFTMLGDGRAVLIGEHLTKNNERFDIQFKGSGRTPFSRSGDGRAVLGPMLREYIISEAMHFLKIPTTRSLAVVKTGEDVVREQISQGAILTRVALGHLRVGTFQYIAAKQNISDLEILINYTIEKYYPNIKSSKNKALDLLNVLIEKQTQLVIDWMRVGFIHGVMNTDNMSISGETIDYGPCAFMDVYDPKTVFSSIDQLGRYAYENQPKITKWNLTRFAECLIPLISTNEDEAIKLATEALDKFEQNYETKWLNMMRDKLGLYGEDKEDKNLIMELLNWMKEKKADYTNTFIFLMNKTIKNSEVYDNADFDLWKTKWMKRLVMFGNTHDKSVDLMSSCNPMVIPRNHKIEEALMLANNGDLTLFNKLIKILKNPYLVNNGDLELMSPAPHSDEKYQTFCGT.

Gly-87, Gly-89, Arg-90, Lys-110, Asp-122, Gly-123, Arg-173, and Arg-180 together coordinate ATP. Asp-249 acts as the Proton acceptor in catalysis. Residues Asn-250 and Asp-259 each coordinate Mg(2+). An ATP-binding site is contributed by Asp-259.

Belongs to the SELO family. Mg(2+) is required as a cofactor. The cofactor is Mn(2+).

It catalyses the reaction L-seryl-[protein] + ATP = 3-O-(5'-adenylyl)-L-seryl-[protein] + diphosphate. It carries out the reaction L-threonyl-[protein] + ATP = 3-O-(5'-adenylyl)-L-threonyl-[protein] + diphosphate. The catalysed reaction is L-tyrosyl-[protein] + ATP = O-(5'-adenylyl)-L-tyrosyl-[protein] + diphosphate. The enzyme catalyses L-histidyl-[protein] + UTP = N(tele)-(5'-uridylyl)-L-histidyl-[protein] + diphosphate. It catalyses the reaction L-seryl-[protein] + UTP = O-(5'-uridylyl)-L-seryl-[protein] + diphosphate. It carries out the reaction L-tyrosyl-[protein] + UTP = O-(5'-uridylyl)-L-tyrosyl-[protein] + diphosphate. Nucleotidyltransferase involved in the post-translational modification of proteins. It can catalyze the addition of adenosine monophosphate (AMP) or uridine monophosphate (UMP) to a protein, resulting in modifications known as AMPylation and UMPylation. The chain is Protein nucleotidyltransferase YdiU from Pelagibacter ubique (strain HTCC1062).